A 992-amino-acid chain; its full sequence is Disks large-associated protein 4 (992 aa).

Positions 1–20 (MKGLGDSRPRHLSDSLDPPH) are enriched in basic and acidic residues. Disordered stretches follow at residues 1-31 (MKGL…DRNP) and 154-226 (APSM…ASGL). Gly residues predominate over residues 162 to 171 (GKVGGNGGKK). The span at 172-194 (GVLEDGKGRRAKSKERAKAGEPK) shows a compositional bias: basic and acidic residues. Over residues 199-208 (SNISGWWSSD) the composition is skewed to polar residues. 2 positions are modified to phosphoserine: serine 206 and serine 207. The residue at position 290 (arginine 290) is an Omega-N-methylarginine. Disordered regions lie at residues 342 to 435 (TTLL…SWEE), 527 to 665 (SVSL…RKLS), 677 to 751 (VPKE…GPRQ), 763 to 798 (SYGD…AQPG), and 915 to 992 (TPEK…QTRL). A phosphoserine mark is found at serine 377, serine 380, serine 384, serine 388, serine 405, serine 415, and serine 421. The span at 399–413 (LRATQQSLGEQSNPR) shows a compositional bias: polar residues. Positions 528–554 (VSLQSLSPPPSTGSLSNSRTLPSSSCL) are enriched in low complexity. Residues 576–591 (VTVQSSTESAQDTYLD) show a composition bias toward polar residues. Phosphoserine occurs at positions 580, 581, 609, 611, 665, and 744. Residues 600-620 (TSQSGLSNSSDSLDSSTRPPS) show a composition bias toward low complexity. Residue threonine 915 is modified to Phosphothreonine. 2 stretches are compositionally biased toward basic and acidic residues: residues 915 to 925 (TPEKRKEEKKP) and 940 to 958 (VSRD…EARK). Positions 969 to 978 (VRQNSATESA) are enriched in polar residues. Serine 973 carries the post-translational modification Phosphoserine.

Belongs to the SAPAP family. In terms of assembly, interacts with DLG1 and DLG4/PSD-95. In terms of tissue distribution, expressed in brain.

The protein localises to the membrane. Functionally, may play a role in the molecular organization of synapses and neuronal cell signaling. Could be an adapter protein linking ion channel to the subsynaptic cytoskeleton. May induce enrichment of PSD-95/SAP90 at the plasma membrane. The sequence is that of Disks large-associated protein 4 (Dlgap4) from Rattus norvegicus (Rat).